The following is a 97-amino-acid chain: Class II hydrophobin A (97 aa).

Residues 1–15 (MKSVVFASLIASALA) form the signal peptide. Cystine bridges form between cysteine 30/cysteine 79, cysteine 40/cysteine 53, and cysteine 80/cysteine 91.

This sequence belongs to the cerato-ulmin hydrophobin family.

The protein localises to the secreted. The protein resides in the cell wall. Its subcellular location is the vacuole. It localises to the cytoplasmic vesicle. Functionally, aerial growth, conidiation, and dispersal of filamentous fungi in the environment rely upon a capability of their secreting small amphipathic proteins called hydrophobins (HPBs) with low sequence identity. Class I can self-assemble into an outermost layer of rodlet bundles on aerial cell surfaces, conferring cellular hydrophobicity that supports fungal growth, development and dispersal; whereas Class II form highly ordered films at water-air interfaces through intermolecular interactions but contribute nothing to the rodlet structure. Hyd2A contributes to certain cell wall-related features, such as hydrophobicity but is not involved in cell wall-related events during fungal proliferation in host hemocoel. Does not contribute to conidial hydrophobicity. Involved in insect hemocoel colonization independent of cell hydrophobicity, as well as in the asexual development. This chain is Class II hydrophobin A, found in Beauveria bassiana (strain ARSEF 2860) (White muscardine disease fungus).